The following is a 315-amino-acid chain: Fructose-1,6-bisphosphatase class 1 (315 aa).

Mg(2+) is bound by residues glutamate 90, aspartate 111, leucine 113, and aspartate 114. Substrate is bound by residues 114–117 (DGSS), tyrosine 222, and lysine 253. Residue glutamate 259 participates in Mg(2+) binding.

It belongs to the FBPase class 1 family. In terms of assembly, homotetramer. It depends on Mg(2+) as a cofactor.

The protein localises to the cytoplasm. The enzyme catalyses beta-D-fructose 1,6-bisphosphate + H2O = beta-D-fructose 6-phosphate + phosphate. The protein operates within carbohydrate biosynthesis; gluconeogenesis. This Trichlorobacter lovleyi (strain ATCC BAA-1151 / DSM 17278 / SZ) (Geobacter lovleyi) protein is Fructose-1,6-bisphosphatase class 1.